The following is a 239-amino-acid chain: Tetraspanin-9 (239 aa).

At 1-12 (MARGCLCCVKYM) the chain is on the cytoplasmic side. The chain crosses the membrane as a helical span at residues 13–33 (LFLFNLLFWLGGCGLLGVGVW). The Extracellular segment spans residues 34 to 55 (LSVSQGSFATLSPSFPSISAAN). The helical transmembrane segment at 56–76 (LIITLGAVIMVTGFLGCLGAI) threads the bilayer. Residues 77–85 (KENKCLLLS) lie on the Cytoplasmic side of the membrane. A helical transmembrane segment spans residues 86–106 (FFITLLVILLAELILLILFFV). At 107–203 (YTDNVSENAR…VEEWLDDNKH (97 aa)) the chain is on the extracellular side. Asparagine 110 and asparagine 180 each carry an N-linked (GlcNAc...) asparagine glycan. Residues 204 to 224 (LLGTIAMCVLVIQLLGMAFSM) form a helical membrane-spanning segment. Residues 225 to 239 (TLYQQIHRSGKKYEA) lie on the Cytoplasmic side of the membrane.

This sequence belongs to the tetraspanin (TM4SF) family.

The protein localises to the membrane. This is Tetraspanin-9 (tspan9) from Salmo salar (Atlantic salmon).